The sequence spans 189 residues: Apolipoprotein D (189 aa).

Positions 1 to 20 (MVTMLMFLATLAGLFTTAKG) are cleaved as a signal peptide. Position 21 is a pyrrolidone carboxylic acid (Q21). 2 disulfides stabilise this stretch: C28–C134 and C61–C185. Residues N65 and N98 are each glycosylated (N-linked (GlcNAc...) asparagine).

It belongs to the calycin superfamily. Lipocalin family. Homodimer. In terms of tissue distribution, highest levels of expression in brain, testis, virgin mammary gland and salivary gland. Moderate levels in skeletal muscle, lactating mammary gland and thymus. Low levels in lung and lymph node. No expression in kidney, pancreas, liver or spleen.

The protein resides in the secreted. APOD occurs in the macromolecular complex with lecithin-transport and binding of bilin. Appears to be able to transport a variety of ligands in a number of different contexts. This is Apolipoprotein D (Apod) from Mus musculus (Mouse).